A 306-amino-acid chain; its full sequence is Acetyl-coenzyme A carboxylase carboxyl transferase subunit beta (306 aa).

A CoA carboxyltransferase N-terminal domain is found at 25–294 (LWIKDPTSGE…AVNPSNPSPT (270 aa)). The tract at residues 286–306 (VNPSNPSPTDSQPPLSKAEAA) is disordered. The span at 287–299 (NPSNPSPTDSQPP) shows a compositional bias: polar residues.

Belongs to the AccD/PCCB family. In terms of assembly, acetyl-CoA carboxylase is a heterohexamer composed of biotin carboxyl carrier protein (AccB), biotin carboxylase (AccC) and two subunits each of ACCase subunit alpha (AccA) and ACCase subunit beta (AccD).

Its subcellular location is the cytoplasm. It carries out the reaction N(6)-carboxybiotinyl-L-lysyl-[protein] + acetyl-CoA = N(6)-biotinyl-L-lysyl-[protein] + malonyl-CoA. It functions in the pathway lipid metabolism; malonyl-CoA biosynthesis; malonyl-CoA from acetyl-CoA: step 1/1. Its function is as follows. Component of the acetyl coenzyme A carboxylase (ACC) complex. Biotin carboxylase (BC) catalyzes the carboxylation of biotin on its carrier protein (BCCP) and then the CO(2) group is transferred by the transcarboxylase to acetyl-CoA to form malonyl-CoA. The chain is Acetyl-coenzyme A carboxylase carboxyl transferase subunit beta from Bartonella quintana (strain Toulouse) (Rochalimaea quintana).